Here is an 802-residue protein sequence, read N- to C-terminus: Leucine--tRNA ligase (802 aa).

The short motif at 40-51 (PYPSGAGLHVGH) is the 'HIGH' region element. The 'KMSKS' region motif lies at 576-580 (KMSKS). K579 contributes to the ATP binding site.

It belongs to the class-I aminoacyl-tRNA synthetase family.

It is found in the cytoplasm. It catalyses the reaction tRNA(Leu) + L-leucine + ATP = L-leucyl-tRNA(Leu) + AMP + diphosphate. This Bacillus cereus (strain ATCC 14579 / DSM 31 / CCUG 7414 / JCM 2152 / NBRC 15305 / NCIMB 9373 / NCTC 2599 / NRRL B-3711) protein is Leucine--tRNA ligase.